The primary structure comprises 628 residues: Probable alpha-L-arabinofuranosidase A (628 aa).

Positions 1-25 (MVAFSTISGLGALSLLFSIIESVDG) are cleaved as a signal peptide. Asn36, Asn51, Asn74, Asn152, Asn164, Asn260, Asn359, Asn404, and Asn493 each carry an N-linked (GlcNAc...) asparagine glycan.

This sequence belongs to the glycosyl hydrolase 51 family.

It is found in the secreted. It carries out the reaction Hydrolysis of terminal non-reducing alpha-L-arabinofuranoside residues in alpha-L-arabinosides.. It participates in glycan metabolism; L-arabinan degradation. Its function is as follows. Alpha-L-arabinofuranosidase involved in the degradation of arabinoxylan, a major component of plant hemicellulose. Acts only on small linear 1,5-alpha-linked L-arabinofuranosyl oligosaccharides. The protein is Probable alpha-L-arabinofuranosidase A (abfA) of Aspergillus terreus (strain NIH 2624 / FGSC A1156).